The chain runs to 342 residues: S-adenosyl-L-methionine-dependent tRNA 4-demethylwyosine synthase (342 aa).

[4Fe-4S] cluster is bound by residues Cys45, Cys58, Cys71, Cys81, Cys85, and Cys88. The Radical SAM core domain occupies 64–312 (YGIHSHRCLQ…VKHLPGYHIE (249 aa)).

It belongs to the TYW1 family. In terms of assembly, monomer. The cofactor is [4Fe-4S] cluster.

It is found in the cytoplasm. The catalysed reaction is N(1)-methylguanosine(37) in tRNA(Phe) + pyruvate + S-adenosyl-L-methionine = 4-demethylwyosine(37) in tRNA(Phe) + 5'-deoxyadenosine + L-methionine + CO2 + H2O. Component of the wyosine derivatives biosynthesis pathway that catalyzes the condensation of N-methylguanine with 2 carbon atoms from pyruvate to form the tricyclic 4-demethylwyosine (imG-14) on guanosine-37 of tRNA(Phe). The polypeptide is S-adenosyl-L-methionine-dependent tRNA 4-demethylwyosine synthase (Pyrococcus abyssi (strain GE5 / Orsay)).